Here is a 249-residue protein sequence, read N- to C-terminus: MTRYKATISYDGYAFAGFQRQSHARSVQEEIEKTLTRLNKGQTITVHGAGRTDSGVHALGQVIHFDLPYQMDEEKLRFALDTQSPEDIDVISIELVADDFHCRYAKHSKTYEFILDRGRPKNPMRRHYATHFPYPLDVERMQIAIKKLEGTHDFTGFTASGTSVEDKVRTITEASLIVDETGQFLTFTFSGNGFLYKQIRNMVGTLLKIGNNRMPVEQIDLILEKKDRQLAGPTAAPNGLYLKEIRYEE.

The active-site Nucleophile is aspartate 53. Substrate is bound at residue tyrosine 111.

It belongs to the tRNA pseudouridine synthase TruA family. Homodimer.

It catalyses the reaction uridine(38/39/40) in tRNA = pseudouridine(38/39/40) in tRNA. Functionally, formation of pseudouridine at positions 38, 39 and 40 in the anticodon stem and loop of transfer RNAs. This chain is tRNA pseudouridine synthase A, found in Streptococcus pneumoniae serotype 19F (strain G54).